A 344-amino-acid chain; its full sequence is GTP 3',8-cyclase (344 aa).

The Radical SAM core domain occupies 19 to 239 (PFGRTIDYLR…ANYTLTDLPD (221 aa)). Arg-28 lines the GTP pocket. Residues Cys-35 and Cys-39 each contribute to the [4Fe-4S] cluster site. Position 41 (Tyr-41) interacts with S-adenosyl-L-methionine. Residue Cys-42 participates in [4Fe-4S] cluster binding. Residue Arg-77 participates in GTP binding. Gly-81 contacts S-adenosyl-L-methionine. Thr-111 provides a ligand contact to GTP. Ser-135 is a binding site for S-adenosyl-L-methionine. Lys-171 is a GTP binding site. Met-205 is an S-adenosyl-L-methionine binding site. Cys-268 and Cys-271 together coordinate [4Fe-4S] cluster. 273-275 (RVR) lines the GTP pocket. Position 285 (Cys-285) interacts with [4Fe-4S] cluster.

Belongs to the radical SAM superfamily. MoaA family. As to quaternary structure, monomer and homodimer. Requires [4Fe-4S] cluster as cofactor.

The enzyme catalyses GTP + AH2 + S-adenosyl-L-methionine = (8S)-3',8-cyclo-7,8-dihydroguanosine 5'-triphosphate + 5'-deoxyadenosine + L-methionine + A + H(+). The protein operates within cofactor biosynthesis; molybdopterin biosynthesis. In terms of biological role, catalyzes the cyclization of GTP to (8S)-3',8-cyclo-7,8-dihydroguanosine 5'-triphosphate. This is GTP 3',8-cyclase from Rhodopseudomonas palustris (strain TIE-1).